The following is a 382-amino-acid chain: Heme A synthase (382 aa).

The next 8 membrane-spanning stretches (helical) occupy residues 25–45 (GAVRAWLYLLAVLVVAMVAVG), 112–132 (LLGRIVGLVFFLPFAWFWARG), 138–158 (LLLGLLGLGLLGGLQGAIGWI), 176–196 (LALHLTTASLILAGLVWLAAG), 211–231 (VVAGLLPALVLVQIWLGGLVA), 270–290 (LALVQFNHRLFAYLVVVVAIA), 303–323 (AAAGRAMGLAALATAQMGLGI), and 327–347 (LLHVPLWAGLAHQVFAMAVLI). His-277 serves as a coordination point for heme. Position 338 (His-338) interacts with heme.

It belongs to the COX15/CtaA family. Type 2 subfamily. In terms of assembly, interacts with CtaB. Heme b is required as a cofactor.

The protein resides in the cell membrane. The catalysed reaction is Fe(II)-heme o + 2 A + H2O = Fe(II)-heme a + 2 AH2. It participates in porphyrin-containing compound metabolism; heme A biosynthesis; heme A from heme O: step 1/1. In terms of biological role, catalyzes the conversion of heme O to heme A by two successive hydroxylations of the methyl group at C8. The first hydroxylation forms heme I, the second hydroxylation results in an unstable dihydroxymethyl group, which spontaneously dehydrates, resulting in the formyl group of heme A. This is Heme A synthase from Methylorubrum extorquens (strain PA1) (Methylobacterium extorquens).